Here is a 426-residue protein sequence, read N- to C-terminus: Glutamate-1-semialdehyde 2,1-aminomutase (426 aa).

An N6-(pyridoxal phosphate)lysine modification is found at lysine 265.

Belongs to the class-III pyridoxal-phosphate-dependent aminotransferase family. HemL subfamily. Homodimer. Pyridoxal 5'-phosphate is required as a cofactor.

It is found in the cytoplasm. The enzyme catalyses (S)-4-amino-5-oxopentanoate = 5-aminolevulinate. It participates in porphyrin-containing compound metabolism; protoporphyrin-IX biosynthesis; 5-aminolevulinate from L-glutamyl-tRNA(Glu): step 2/2. The chain is Glutamate-1-semialdehyde 2,1-aminomutase from Klebsiella pneumoniae subsp. pneumoniae (strain ATCC 700721 / MGH 78578).